Consider the following 331-residue polypeptide: Glycerophosphodiester phosphodiesterase 1 (331 aa).

The Cytoplasmic portion of the chain corresponds to 1–3 (MWL). The helical transmembrane segment at 4–24 (WEDQGGLLGPFSFVLVLLLVV) threads the bilayer. Over 25–248 (TRSPFNACVL…PRYSVFWKQS (224 aa)) the chain is Lumenal. One can recognise a GP-PDE domain in the interval 65-331 (VSAIAHRGGS…SMLEDCAPHF (267 aa)). Positions 97 and 99 each coordinate Mg(2+). Asparagine 168 is a glycosylation site (N-linked (GlcNAc...) asparagine). Residue aspartate 174 participates in Mg(2+) binding. The chain crosses the membrane as a helical span at residues 249-269 (VFVVLDILLDWSMHNVLWYLC). Topologically, residues 270–331 (GISAFLMQKD…SMLEDCAPHF (62 aa)) are cytoplasmic.

It belongs to the glycerophosphoryl diester phosphodiesterase family. Interacts with PRAF2. Interacts with RGS16. Mg(2+) is required as a cofactor. Post-translationally, N-glycosylated. In terms of tissue distribution, detected in heart, brain, lung, liver, skeletal muscle, kidney, pituitary and testis.

It localises to the cell membrane. The protein resides in the cytoplasmic vesicle membrane. It carries out the reaction sn-glycero-3-phospho-1D-myo-inositol + H2O = myo-inositol + sn-glycerol 3-phosphate + H(+). The enzyme catalyses 1-O-(1Z-octadecenyl)-sn-glycero-3-phospho-(N-5Z,8Z,11Z,14Z-eicosatetraenoyl)-ethanolamine + H2O = 1-O-(1Z-octadecenyl)-sn-glycero-3-phosphate + N-(5Z,8Z,11Z,14Z-eicosatetraenoyl)-ethanolamine + H(+). The catalysed reaction is 1-O-(1Z-octadecenyl)-sn-glycero-3-phospho-(N-9Z-octadecenoyl)-ethanolamine + H2O = 1-O-(1Z-octadecenyl)-sn-glycero-3-phosphate + N-(9Z-octadecenoyl) ethanolamine + H(+). It catalyses the reaction 1-O-(1Z-octadecenyl)-sn-glycero-3-phospho-N-hexadecanoyl-ethanolamine + H2O = 1-O-(1Z-octadecenyl)-sn-glycero-3-phosphate + N-hexadecanoylethanolamine + H(+). It carries out the reaction N-(4Z,7Z,10Z,13Z,16Z,19Z)-docosahexaenoyl-sn-glycero-3-phosphoethanolamine + H2O = N-(4Z,7Z,10Z,13Z,16Z,19Z)-docosahexaenoyl ethanolamine + sn-glycerol 3-phosphate + H(+). The enzyme catalyses N-eicosanoyl-sn-glycero-3-phosphoethanolamine + H2O = N-eicosanoyl ethanolamine + sn-glycerol 3-phosphate + H(+). The catalysed reaction is N-hexadecanoyl-sn-glycero-3-phosphoethanolamine + H2O = N-hexadecanoylethanolamine + sn-glycerol 3-phosphate + H(+). It catalyses the reaction N-(9Z-octadecenoyl)-sn-glycero-3-phosphoethanolamine + H2O = N-(9Z-octadecenoyl) ethanolamine + sn-glycerol 3-phosphate + H(+). It carries out the reaction N-(5Z,8Z,11Z,14Z-eicosatetraenoyl)-sn-glycero-3-phosphoethanolamine + H2O = N-(5Z,8Z,11Z,14Z-eicosatetraenoyl)-ethanolamine + sn-glycerol 3-phosphate + H(+). Its activity is regulated as follows. Inhibited by EDTA, calcium chloride, and zinc chloride. Enhanced by magnesium chloride. Glycerophosphodiester phosphodiesterase activity can be modulated by G-protein signaling pathways. Its function is as follows. Hydrolyzes the phosphodiester bond of glycerophosphodiesters such as glycerophosphoinositol (GroPIns) and glycerophosphoethanolamine (GroPEth), to yield a glycerol phosphate and an alcohol. Hydrolyzes glycerophospho-N-acylethanolamines to N-acylethanolamines in the brain and participates in bioactive N-acylethanolamine biosynthesis such as anandamide (an endocannabinoid), N-palmitoylethanolamine (an anti-inflammatory), and N-oleoylethanolamine (an anorexic). In addition, has a lysophospholipase D activity by hydrolyzing N-acyl-lysoplasmenylethanolamine (N-acyl-lysoPlsEt) to N-acylethanolamine. However lysophospholipase D activity is lower than glycerophosphodiester phosphodiesterase activity. Has little or no activity towards glycerophosphocholine. In Rattus norvegicus (Rat), this protein is Glycerophosphodiester phosphodiesterase 1.